A 123-amino-acid chain; its full sequence is Small ribosomal subunit protein uS12 (123 aa).

The interval 1–26 (MPTLNQLVRKPRKRPVAKSKVPALDA) is disordered. The residue at position 89 (Asp-89) is a 3-methylthioaspartic acid. A disordered region spans residues 104 to 123 (TAGVKNRKQSRSKYGAKRPK). A compositionally biased stretch (basic residues) spans 108-123 (KNRKQSRSKYGAKRPK).

This sequence belongs to the universal ribosomal protein uS12 family. As to quaternary structure, part of the 30S ribosomal subunit. Contacts proteins S8 and S17. May interact with IF1 in the 30S initiation complex.

With S4 and S5 plays an important role in translational accuracy. In terms of biological role, interacts with and stabilizes bases of the 16S rRNA that are involved in tRNA selection in the A site and with the mRNA backbone. Located at the interface of the 30S and 50S subunits, it traverses the body of the 30S subunit contacting proteins on the other side and probably holding the rRNA structure together. The combined cluster of proteins S8, S12 and S17 appears to hold together the shoulder and platform of the 30S subunit. This is Small ribosomal subunit protein uS12 from Acidithiobacillus ferrooxidans (strain ATCC 23270 / DSM 14882 / CIP 104768 / NCIMB 8455) (Ferrobacillus ferrooxidans (strain ATCC 23270)).